Consider the following 478-residue polypeptide: Glutamate--tRNA ligase (478 aa).

A 'HIGH' region motif is present at residues proline 8–asparagine 18. Residues lysine 248–arginine 252 carry the 'KMSKS' region motif. Residue lysine 251 participates in ATP binding.

It belongs to the class-I aminoacyl-tRNA synthetase family. Glutamate--tRNA ligase type 1 subfamily. In terms of assembly, monomer.

It localises to the cytoplasm. It carries out the reaction tRNA(Glu) + L-glutamate + ATP = L-glutamyl-tRNA(Glu) + AMP + diphosphate. Its function is as follows. Catalyzes the attachment of glutamate to tRNA(Glu) in a two-step reaction: glutamate is first activated by ATP to form Glu-AMP and then transferred to the acceptor end of tRNA(Glu). The sequence is that of Glutamate--tRNA ligase from Sulfurihydrogenibium sp. (strain YO3AOP1).